Here is a 205-residue protein sequence, read N- to C-terminus: Metal-independent carbonic anhydrase (205 aa).

A signal peptide spans 1 to 24; sequence MNLFKPRILVLFAATALISGIAIV. The hydrogencarbonate site is built by threonine 106 and tyrosine 124.

Belongs to the iota-class carbonic anhydrase family. Homotetramer; dimer of dimers. Requires Does not require a metal cofactor. as cofactor.

It catalyses the reaction hydrogencarbonate + H(+) = CO2 + H2O. With respect to regulation, activity is not affected by EDTA or 2,6-pyridinedicarboxylic acid (PDA). Activity is not affected by addition of most divalent metal ions, except zinc ions which decrease the activity. Inhibited by the iodide ion. Its function is as follows. Catalyzes the hydration of carbon dioxide (CO2) to bicarbonate (HCO3(-)). Has only very low bicarbonate dehydration activity. May function even in metal-poor environments. This chain is Metal-independent carbonic anhydrase, found in Nostoc sp. (strain PCC 7120 / SAG 25.82 / UTEX 2576).